The following is a 211-amino-acid chain: Suppressor of RNA silencing p3 (211 aa).

This sequence belongs to the tenuiviruses p3 protein family. In terms of assembly, homodimer.

Its subcellular location is the host cytoplasm. In terms of biological role, acts as a suppressor of RNA-mediated gene silencing, also known as post-transcriptional gene silencing (PTGS), presumably through the binding of dsRNA. The polypeptide is Suppressor of RNA silencing p3 (Avena sativa (Oat)).